Consider the following 608-residue polypeptide: Amino-acid acetyltransferase, mitochondrial (608 aa).

The 203-residue stretch at 402–604 (LNLITEHEKG…DICTRIEPSL (203 aa)) folds into the N-acetyltransferase domain.

Belongs to the acetyltransferase family.

It localises to the mitochondrion. The catalysed reaction is L-glutamate + acetyl-CoA = N-acetyl-L-glutamate + CoA + H(+). It functions in the pathway amino-acid biosynthesis; L-arginine biosynthesis; N(2)-acetyl-L-ornithine from L-glutamate: step 1/4. Its function is as follows. N-acetylglutamate synthase involved in arginine biosynthesis. The chain is Amino-acid acetyltransferase, mitochondrial (ARG2) from Yarrowia lipolytica (strain CLIB 122 / E 150) (Yeast).